Consider the following 106-residue polypeptide: Terpredoxin (106 aa).

In terms of domain architecture, 2Fe-2S ferredoxin-type spans 2–106; it reads PRVVFIDEQS…GLIVRVPLPA (105 aa). 4 residues coordinate [2Fe-2S] cluster: cysteine 40, cysteine 46, cysteine 49, and cysteine 87.

It belongs to the adrenodoxin/putidaredoxin family. [2Fe-2S] cluster is required as a cofactor.

Its function is as follows. The oxidation of alpha-terpineol by cytochrome p450-TERP requires the participation of a flavoprotein, terpredoxin reductase, and an iron-sulfur protein, terpredoxin, to mediate the transfer of electrons from NADH to P450 for oxygen activation. This is Terpredoxin (terPB) from Pseudomonas sp.